The sequence spans 188 residues: Cytochrome c oxidase assembly protein CtaG (188 aa).

Residues 1 to 8 (MSKKSNKN) are Cytoplasmic-facing. Residues 9–31 (LAFSLLGLIISMVLLSFASVPIY) traverse the membrane as a helical; Signal-anchor for type II membrane protein segment. Topologically, residues 32–188 (NLFCKVTGYG…SSLRGNYVSN (157 aa)) are periplasmic.

This sequence belongs to the COX11/CtaG family.

The protein resides in the cell inner membrane. Exerts its effect at some terminal stage of cytochrome c oxidase synthesis, probably by being involved in the insertion of the copper B into subunit I. This chain is Cytochrome c oxidase assembly protein CtaG, found in Rickettsia conorii (strain ATCC VR-613 / Malish 7).